A 262-amino-acid chain; its full sequence is Acyl-[acyl-carrier-protein]--UDP-N-acetylglucosamine O-acyltransferase (262 aa).

Belongs to the transferase hexapeptide repeat family. LpxA subfamily. In terms of assembly, homotrimer.

It is found in the cytoplasm. The catalysed reaction is a (3R)-hydroxyacyl-[ACP] + UDP-N-acetyl-alpha-D-glucosamine = a UDP-3-O-[(3R)-3-hydroxyacyl]-N-acetyl-alpha-D-glucosamine + holo-[ACP]. It functions in the pathway glycolipid biosynthesis; lipid IV(A) biosynthesis; lipid IV(A) from (3R)-3-hydroxytetradecanoyl-[acyl-carrier-protein] and UDP-N-acetyl-alpha-D-glucosamine: step 1/6. Its function is as follows. Involved in the biosynthesis of lipid A, a phosphorylated glycolipid that anchors the lipopolysaccharide to the outer membrane of the cell. In Verminephrobacter eiseniae (strain EF01-2), this protein is Acyl-[acyl-carrier-protein]--UDP-N-acetylglucosamine O-acyltransferase.